The sequence spans 74 residues: MDSEVQRDGRILDLIDDAWREDKLPYEDVAIPLNELPEPEQDNGGTTESVKEQEMKWTDLALQYLHENVPPIGN.

The segment at 33 to 53 (LNELPEPEQDNGGTTESVKEQ) is disordered.

Belongs to the APC13 family. In terms of assembly, the mammalian APC/C is composed at least of 14 distinct subunits ANAPC1, ANAPC2, CDC27/APC3, ANAPC4, ANAPC5, CDC16/APC6, ANAPC7, CDC23/APC8, ANAPC10, ANAPC11, CDC26/APC12, ANAPC13, ANAPC15 and ANAPC16 that assemble into a complex of at least 19 chains with a combined molecular mass of around 1.2 MDa; APC/C interacts with FZR1 and FBXO5.

The protein resides in the nucleus. Its pathway is protein modification; protein ubiquitination. Functionally, component of the anaphase promoting complex/cyclosome (APC/C), a cell cycle-regulated E3 ubiquitin ligase that controls progression through mitosis and the G1 phase of the cell cycle. The APC/C complex acts by mediating ubiquitination and subsequent degradation of target proteins: it mainly mediates the formation of 'Lys-11'-linked polyubiquitin chains and, to a lower extent, the formation of 'Lys-48'- and 'Lys-63'-linked polyubiquitin chains. The APC/C complex catalyzes assembly of branched 'Lys-11'-/'Lys-48'-linked branched ubiquitin chains on target proteins. The protein is Anaphase-promoting complex subunit 13 (ANAPC13) of Bos taurus (Bovine).